A 583-amino-acid polypeptide reads, in one-letter code: Putative ABC transporter ATP-binding protein exp8 (583 aa).

Positions 25 to 308 (TFLALSFLLA…VTQNFSTLQT (284 aa)) constitute an ABC transmembrane type-1 domain. A run of 5 helical transmembrane segments spans residues 26-46 (FLAL…PLVA), 61-81 (AVTV…VQYV), 135-155 (MFSG…TTLY), 159-179 (VLDF…FLLV), and 259-279 (LGYA…GITV). The ABC transporter domain occupies 341 to 574 (IRFEHVCFSY…GGTYHKMYSL (234 aa)). 374-381 (GHTGSGKS) provides a ligand contact to ATP.

This sequence belongs to the ABC transporter superfamily.

It is found in the cell membrane. The chain is Putative ABC transporter ATP-binding protein exp8 (exp8) from Streptococcus pneumoniae serotype 4 (strain ATCC BAA-334 / TIGR4).